The sequence spans 425 residues: Probable G-protein coupled receptor 63 (425 aa).

Topologically, residues 1 to 87 (MVVSGVLTAP…VFKSLNLAVQ (87 aa)) are extracellular. N-linked (GlcNAc...) asparagine glycosylation is found at Asn-22, Asn-34, and Asn-68. The helical transmembrane segment at 88 to 112 (IILSAIMIFILFVSFLGNLVVCLMV) threads the bilayer. Over 113–123 (YQKAAMRSAIN) the chain is Cytoplasmic. A helical transmembrane segment spans residues 124–148 (ILLASLAFADMLLAVLNMPFALVTI). Residues 149–165 (LTTRWIFGKFFCRLSAM) lie on the Extracellular side of the membrane. Residues 166 to 190 (FFWLFVIEGVAILLIISIDRFLIIV) traverse the membrane as a helical segment. Residues 191-202 (QRQDKLNPYRAK) lie on the Cytoplasmic side of the membrane. The helical transmembrane segment at 203 to 222 (VLIAVSWATAFSVAFPLAVG) threads the bilayer. Residues 223 to 247 (NPDLQIPSRAPQCVFGYTTNSGYQA) lie on the Extracellular side of the membrane. The chain crosses the membrane as a helical span at residues 248–272 (YVILISLISFFIPFLVILYSFMGIL). Over 273–321 (NTLRHNALRIHSYPEGICLSQASKLGLMSLQRPFQMSIDMGFKTRAFTT) the chain is Cytoplasmic. A helical membrane pass occupies residues 322–345 (ILILFAVFIVCWAPFTTYSLVATF). At 346–357 (SKHFYYQHNFFE) the chain is on the extracellular side. A helical transmembrane segment spans residues 358-379 (ISTWLLWLCYLKSALNPLIYYW). Topologically, residues 380-425 (RIKKFHDACLDMMPKSFKFLPRLPGHTRRRIRPSAVYVCGEHRTVL) are cytoplasmic.

Belongs to the G-protein coupled receptor 1 family. Brain specific.

The protein localises to the cell membrane. Orphan receptor. May play a role in brain function. The protein is Probable G-protein coupled receptor 63 (Gpr63) of Mus musculus (Mouse).